A 78-amino-acid polypeptide reads, in one-letter code: MPRIYKIVGDTTTGMKFRIEVVAEKPYDAIEKAYSLIGSRHKLSRMQIRIREVVPISPEEARSEHVKILMAVDKIYKY.

The protein belongs to the eukaryotic ribosomal protein eL20 family. In terms of assembly, part of the 50S ribosomal subunit. Binds 23S rRNA.

In Pyrobaculum arsenaticum (strain DSM 13514 / JCM 11321 / PZ6), this protein is Large ribosomal subunit protein eL20.